Reading from the N-terminus, the 444-residue chain is Tryptophan 5-hydroxylase 1 (444 aa).

One can recognise an ACT domain in the interval 19–94; it reads SLIFSLKNEV…NVLSVNLPDN (76 aa). Ser-58 is subject to Phosphoserine; by PKA. The L-tryptophan site is built by Tyr-235, Arg-257, and Thr-265. Fe cation-binding residues include His-272, His-277, and Glu-317. L-tryptophan is bound by residues Ser-336 and Ile-366.

The protein belongs to the biopterin-dependent aromatic amino acid hydroxylase family. In terms of assembly, homotetramer. Interacts with DNAJC12. Requires Fe(2+) as cofactor. In terms of processing, ubiquitinated, leading to its degradation by the proteasome. Ubiquitinated is triggered by phosphorylation. Post-translationally, phosphorylated; triggering degradation by the proteasome. In terms of tissue distribution, seems to be less widely expressed than isoform 1.

The catalysed reaction is (6R)-L-erythro-5,6,7,8-tetrahydrobiopterin + L-tryptophan + O2 = 5-hydroxy-L-tryptophan + (4aS,6R)-4a-hydroxy-L-erythro-5,6,7,8-tetrahydrobiopterin. It participates in aromatic compound metabolism; serotonin biosynthesis; serotonin from L-tryptophan: step 1/2. Its function is as follows. Oxidizes L-tryptophan to 5-hydroxy-l-tryptophan in the rate-determining step of serotonin biosynthesis. In Homo sapiens (Human), this protein is Tryptophan 5-hydroxylase 1 (TPH1).